The primary structure comprises 414 residues: Meiotic driver wtf19 (414 aa).

Residues 1–94 (MKNKYYPVRT…RENHSSGTAD (94 aa)) form a disordered region. Residues 11-29 (SMDEMNAKNDNEIDLEKGP) are compositionally biased toward basic and acidic residues. A compositionally biased stretch (polar residues) spans 57-72 (GANNPNLFNTDESTTP). The next 9 helical transmembrane spans lie at 99–119 (FLIK…PAVC), 136–156 (WVYF…LWCF), 170–190 (VTVI…AQCV), 192–212 (VTAI…AQCV), 222–242 (CVKV…IGLF), 247–267 (EMMI…FGCV), 284–304 (TISA…WTLW), 311–331 (LQVL…MSLF), and 339–359 (GYEI…LYEM).

It belongs to the WTF family. As to quaternary structure, homomer. Forms protein aggregates. The two isoforms can interact with each other and with themselves. High sequence similarity is required for their interaction.

The protein resides in the spore membrane. Its subcellular location is the vacuole membrane. The protein localises to the ascus epiplasm. It localises to the cytoplasm. It is found in the endoplasmic reticulum membrane. Functionally, promotes unequal transmission of alleles from the parental zygote to progeny spores by acting as poison/antidote system where the poison and antidote proteins are produced from the same locus; the poison component is trans-acting and targets all spores within an ascus whereas the antidote component is spore-specific, leading to poisoning of all progeny that do not inherit the allele. Its function is as follows. Localizes isoform 2 to the vacuole thereby facilitating its degradation. Forms toxic aggregates that disrupt spore maturation. This Schizosaccharomyces kambucha (Fission yeast) protein is Meiotic driver wtf19.